Consider the following 99-residue polypeptide: Large ribosomal subunit protein uL23 (99 aa).

The protein belongs to the universal ribosomal protein uL23 family. In terms of assembly, part of the 50S ribosomal subunit. Contacts protein L29, and trigger factor when it is bound to the ribosome.

In terms of biological role, one of the early assembly proteins it binds 23S rRNA. One of the proteins that surrounds the polypeptide exit tunnel on the outside of the ribosome. Forms the main docking site for trigger factor binding to the ribosome. In Rhodopseudomonas palustris (strain BisB5), this protein is Large ribosomal subunit protein uL23.